The following is a 142-amino-acid chain: Large ribosomal subunit protein uL11 (142 aa).

The protein belongs to the universal ribosomal protein uL11 family. Part of the ribosomal stalk of the 50S ribosomal subunit. Interacts with L10 and the large rRNA to form the base of the stalk. L10 forms an elongated spine to which L12 dimers bind in a sequential fashion forming a multimeric L10(L12)X complex. One or more lysine residues are methylated.

Forms part of the ribosomal stalk which helps the ribosome interact with GTP-bound translation factors. The chain is Large ribosomal subunit protein uL11 from Klebsiella pneumoniae subsp. pneumoniae (strain ATCC 700721 / MGH 78578).